A 419-amino-acid polypeptide reads, in one-letter code: Squalene synthase R6 (419 aa).

Residues 397-417 (TMYLVVLLLGILGVAAAVLMA) form a helical membrane-spanning segment.

The protein belongs to the phytoene/squalene synthase family. It depends on Mg(2+) as a cofactor.

The protein localises to the membrane. It carries out the reaction 2 (2E,6E)-farnesyl diphosphate + NADPH + H(+) = squalene + 2 diphosphate + NADP(+). The catalysed reaction is 2 (2E,6E)-farnesyl diphosphate + NADH + H(+) = squalene + 2 diphosphate + NAD(+). It functions in the pathway terpene metabolism; lanosterol biosynthesis; lanosterol from farnesyl diphosphate: step 1/3. Its function is as follows. Squalene synthase; part of the gene cluster that mediates the biosynthesis of squalestatin S1 (SQS1, also known as zaragozic acid A), a heavily oxidized fungal polyketide that offers potent cholesterol lowering activity by targeting squalene synthase (SS). Catalyzes the condensation of 2 two farnesyl pyrophosphate moieties to form squalene. The presence of a gene encoding a squalene synthase supports the identification of the cluster as being responsible for SQS1 production and suggests a likely mechanism for self-resistance. This is Squalene synthase R6 from Phoma sp. (strain ATCC 20986 / MF5453).